A 306-amino-acid polypeptide reads, in one-letter code: Serine/threonine-protein phosphatase 2A catalytic subunit A (306 aa).

Mn(2+) is bound by residues aspartate 54, histidine 56, aspartate 82, and asparagine 114. The active-site Proton donor is histidine 115. 2 residues coordinate Mn(2+): histidine 164 and histidine 238. Leucine methyl ester is present on leucine 306.

It belongs to the PPP phosphatase family. PP-2A subfamily. PP2A consists of a trimeric holoenzyme, composed of a 37 kDa catalytic subunit (C subunit) and a 65 kDa constant regulatory subunit (A subunit), that associates with a variety of regulatory subunits (B subunit) such as phr2AB (B55) and psrA (B56 homolog). The trimer may partially dissociates into a core 'AC' dimer equally active compared to the trimer. Mn(2+) serves as cofactor. Reversibly methyl esterified on Leu-306 by leucine carboxyl methyltransferase 1 (LCMT) and protein phosphatase methylesterase 1 (PPME1). Carboxyl methylation influences the affinity of the catalytic subunit for the different regulatory subunits, thereby modulating the PP2A holoenzyme's substrate specificity, enzyme activity and cellular localization.

The protein localises to the cytoplasm. It localises to the cytosol. Its subcellular location is the nucleus speckle. It catalyses the reaction O-phospho-L-seryl-[protein] + H2O = L-seryl-[protein] + phosphate. It carries out the reaction O-phospho-L-threonyl-[protein] + H2O = L-threonyl-[protein] + phosphate. Its function is as follows. Plays a role in activating the myosin contractile function. Dephosphorylates threonine at 'Thr-1823', 'Thr-1833' and 'Thr-2029' in the C-terminal tail region of myosin II heavy chain (mhcA). Drives the assembly of dephosphorylated myosin II filaments to allow myosin recruitment into the cytoskeleton. The sequence is that of Serine/threonine-protein phosphatase 2A catalytic subunit A (pho2a) from Dictyostelium discoideum (Social amoeba).